Reading from the N-terminus, the 72-residue chain is Translation initiation factor IF-1 (72 aa).

One can recognise an S1-like domain in the interval 1 to 72 (MAKEDNFELE…SKGRITYRAR (72 aa)).

It belongs to the IF-1 family. In terms of assembly, component of the 30S ribosomal translation pre-initiation complex which assembles on the 30S ribosome in the order IF-2 and IF-3, IF-1 and N-formylmethionyl-tRNA(fMet); mRNA recruitment can occur at any time during PIC assembly.

It localises to the cytoplasm. Its function is as follows. One of the essential components for the initiation of protein synthesis. Stabilizes the binding of IF-2 and IF-3 on the 30S subunit to which N-formylmethionyl-tRNA(fMet) subsequently binds. Helps modulate mRNA selection, yielding the 30S pre-initiation complex (PIC). Upon addition of the 50S ribosomal subunit IF-1, IF-2 and IF-3 are released leaving the mature 70S translation initiation complex. In Saccharophagus degradans (strain 2-40 / ATCC 43961 / DSM 17024), this protein is Translation initiation factor IF-1.